The chain runs to 311 residues: tRNA dimethylallyltransferase (311 aa).

Residue 16–23 (GPTASGKS) coordinates ATP. 18-23 (TASGKS) is a binding site for substrate. Residues 41-44 (DSMQ) are interaction with substrate tRNA.

This sequence belongs to the IPP transferase family. As to quaternary structure, monomer. Mg(2+) is required as a cofactor.

It catalyses the reaction adenosine(37) in tRNA + dimethylallyl diphosphate = N(6)-dimethylallyladenosine(37) in tRNA + diphosphate. Its function is as follows. Catalyzes the transfer of a dimethylallyl group onto the adenine at position 37 in tRNAs that read codons beginning with uridine, leading to the formation of N6-(dimethylallyl)adenosine (i(6)A). This Geobacter sulfurreducens (strain ATCC 51573 / DSM 12127 / PCA) protein is tRNA dimethylallyltransferase.